The sequence spans 858 residues: Leucine--tRNA ligase (858 aa).

Residues P42–H52 carry the 'HIGH' region motif. The 'KMSKS' region motif lies at K618–S622. Residue K621 participates in ATP binding.

This sequence belongs to the class-I aminoacyl-tRNA synthetase family.

It is found in the cytoplasm. The enzyme catalyses tRNA(Leu) + L-leucine + ATP = L-leucyl-tRNA(Leu) + AMP + diphosphate. This chain is Leucine--tRNA ligase, found in Aliivibrio fischeri (strain MJ11) (Vibrio fischeri).